The chain runs to 363 residues: 3-isopropylmalate dehydrogenase (363 aa).

Residue 78 to 91 (GPKWEHLPPDQQPE) coordinates NAD(+). 4 residues coordinate substrate: R99, R109, R138, and D227. Mg(2+) is bound by residues D227, D251, and D255. 285–297 (GSAPDITGKNIAN) lines the NAD(+) pocket.

The protein belongs to the isocitrate and isopropylmalate dehydrogenases family. LeuB type 1 subfamily. Homodimer. Mg(2+) is required as a cofactor. The cofactor is Mn(2+).

Its subcellular location is the cytoplasm. The catalysed reaction is (2R,3S)-3-isopropylmalate + NAD(+) = 4-methyl-2-oxopentanoate + CO2 + NADH. Its pathway is amino-acid biosynthesis; L-leucine biosynthesis; L-leucine from 3-methyl-2-oxobutanoate: step 3/4. Functionally, catalyzes the oxidation of 3-carboxy-2-hydroxy-4-methylpentanoate (3-isopropylmalate) to 3-carboxy-4-methyl-2-oxopentanoate. The product decarboxylates to 4-methyl-2 oxopentanoate. In Shigella boydii serotype 4 (strain Sb227), this protein is 3-isopropylmalate dehydrogenase.